The primary structure comprises 403 residues: Argininosuccinate synthase (403 aa).

ATP contacts are provided by residues 12–20 (AYSGGLDTS) and alanine 39. The L-citrulline site is built by tyrosine 91 and serine 96. Position 121 (glycine 121) interacts with ATP. L-aspartate contacts are provided by threonine 123, asparagine 127, and aspartate 128. Residue asparagine 127 participates in L-citrulline binding. L-citrulline-binding residues include arginine 131, serine 180, serine 189, glutamate 265, and tyrosine 277.

It belongs to the argininosuccinate synthase family. Type 1 subfamily. In terms of assembly, homotetramer.

The protein localises to the cytoplasm. The catalysed reaction is L-citrulline + L-aspartate + ATP = 2-(N(omega)-L-arginino)succinate + AMP + diphosphate + H(+). The protein operates within amino-acid biosynthesis; L-arginine biosynthesis; L-arginine from L-ornithine and carbamoyl phosphate: step 2/3. This is Argininosuccinate synthase from Vibrio vulnificus (strain CMCP6).